We begin with the raw amino-acid sequence, 133 residues long: Ribosome-binding factor A (133 aa).

This sequence belongs to the RbfA family. In terms of assembly, monomer. Binds 30S ribosomal subunits, but not 50S ribosomal subunits or 70S ribosomes.

The protein resides in the cytoplasm. In terms of biological role, one of several proteins that assist in the late maturation steps of the functional core of the 30S ribosomal subunit. Associates with free 30S ribosomal subunits (but not with 30S subunits that are part of 70S ribosomes or polysomes). Required for efficient processing of 16S rRNA. May interact with the 5'-terminal helix region of 16S rRNA. This chain is Ribosome-binding factor A, found in Salmonella heidelberg (strain SL476).